Consider the following 363-residue polypeptide: MKIGVFVPIGNNGWLISTHAPQYMPTFELNKAIVQKAEHYHFDFALSMIKLRGFGGKTEFWDHNLESFTLMAGLAAVTSKIQIYATAATLTLPPAIVARMASTIDSISGGRFGVNLVTGWQKPEYDQMGMWPGDDYFASRYDYLTEYVQVLRDLWGTGRSDFKGDYFTMNDCRVSPRPSQPMKVICAGQSDAGMAFSAQHADYNFCFGKGVNTPTAFAPTAARMMQAAEKTGRDVGSYVLFMVIADETDEAARAKWEHYKAGADEEALAWLTEQSQKDTRSGSDTNVRQMADPTSAVNINMGTLVGSYASVARMLDEVASVPGTDGVLLTFDDFLAGIDAFGERIQPLMRCRDHIAPVTREVA.

FMN contacts are provided by residues 49–50, N115, E124, 140–141, and S190; these read IK and RY.

The protein belongs to the NtaA/SnaA/DszA monooxygenase family. RutA subfamily.

The catalysed reaction is uracil + FMNH2 + NADH + O2 = (Z)-3-ureidoacrylate + FMN + NAD(+) + H2O + H(+). The enzyme catalyses thymine + FMNH2 + NADH + O2 = (Z)-2-methylureidoacrylate + FMN + NAD(+) + H2O + H(+). Its function is as follows. Catalyzes the pyrimidine ring opening between N-3 and C-4 by an unusual flavin hydroperoxide-catalyzed mechanism, adding oxygen atoms in the process to yield ureidoacrylate peracid, that immediately reacts with FMN forming ureidoacrylate and FMN-N(5)-oxide. The FMN-N(5)-oxide reacts spontaneously with NADH to produce FMN. Requires the flavin reductase RutF to regenerate FMN in vivo. This Klebsiella variicola (strain At-22) protein is Pyrimidine monooxygenase RutA.